Here is a 331-residue protein sequence, read N- to C-terminus: UPF0194 membrane protein YbhG (331 aa).

Positions 1–15 (MKKPVVIGLAVVVLA) are cleaved as a signal peptide. Residues 107-208 (EEIAQAAAAV…LNLQDSTLIA (102 aa)) adopt a coiled-coil conformation.

Belongs to the UPF0194 family.

The protein localises to the periplasm. The sequence is that of UPF0194 membrane protein YbhG from Escherichia coli O157:H7 (strain EC4115 / EHEC).